The chain runs to 438 residues: Glucosamine kinase (438 aa).

Residues Lys133, 186 to 188 (AYL), and Asp193 each bind ATP. Asp300 contributes to the D-glucosamine binding site. Mg(2+) is bound by residues Gln305, Asp317, and Asp319. Positions 405-420 (QEVREYLYAVRHLPHW) match the Substrate specificity determinant motif motif. A D-glucosamine-binding site is contributed by Glu409.

Belongs to the actinobacterial glucosamine kinase family. In terms of assembly, monomer. The cofactor is Mg(2+).

The enzyme catalyses D-glucosamine + ATP = D-glucosamine 6-phosphate + ADP + H(+). Its function is as follows. Catalyzes the ATP-dependent phosphorylation of D-glucosamine (GlcN) to D-glucosamine 6-phosphate. May be involved in the phosphorylation of acquired extracellular GlcN derived from the hydrolysis of chitosan, i.e., in the incorporation of exogenous GlcN into the bacterial GlcNAc metabolism. To a lesser extent, is also active on glucose, but is unable to phosphorylate maltose, 18 other sugars and several aminoglycoside antibiotics. This chain is Glucosamine kinase, found in Streptacidiphilus jiangxiensis.